The following is a 90-amino-acid chain: Barrier-to-autointegration factor (90 aa).

Phosphoserine occurs at positions 2 and 3. Residue T4 is modified to Phosphothreonine. S5 carries the phosphoserine modification.

This sequence belongs to the BAF family. As to quaternary structure, homodimer.

Its subcellular location is the nucleus. It is found in the chromosome. The protein resides in the nucleus envelope. The protein localises to the cytoplasm. In terms of biological role, non-specific DNA-binding protein that plays key roles in mitotic nuclear reassembly, chromatin organization, DNA damage response, gene expression and intrinsic immunity against foreign DNA. Contains two non-specific double-stranded DNA (dsDNA)-binding sites which promote DNA cross-bridging. Plays a key role in nuclear membrane reformation at the end of mitosis by driving formation of a single nucleus in a spindle-independent manner. Transiently cross-bridges anaphase chromosomes via its ability to bridge distant DNA sites, leading to the formation of a dense chromatin network at the chromosome ensemble surface that limits membranes to the surface. Also acts as a negative regulator of innate immune activation by restricting CGAS activity toward self-DNA upon acute loss of nuclear membrane integrity. Outcompetes CGAS for DNA-binding, thereby preventing CGAS activation and subsequent damaging autoinflammatory responses. Also involved in DNA damage response; acts by inhibiting the ADP-ribosyltransferase activity of PARP1. Involved in the recognition of exogenous dsDNA in the cytosol: associates with exogenous dsDNA immediately after its appearance in the cytosol at endosome breakdown and is required to avoid autophagy. The protein is Barrier-to-autointegration factor (banf1) of Danio rerio (Zebrafish).